Reading from the N-terminus, the 695-residue chain is Transketolase (695 aa).

Residue H37 participates in substrate binding. Thiamine diphosphate contacts are provided by residues H77 and 126 to 128 (GPL). D164 lines the Mg(2+) pocket. G165 and N194 together coordinate thiamine diphosphate. Positions 194 and 196 each coordinate Mg(2+). The substrate site is built by H268, R361, and S388. H268 contacts thiamine diphosphate. The active-site Proton donor is E415. F441 is a binding site for thiamine diphosphate. Positions 465, 473, and 524 each coordinate substrate.

Belongs to the transketolase family. As to quaternary structure, homodimer. Mg(2+) is required as a cofactor. It depends on Ca(2+) as a cofactor. Mn(2+) serves as cofactor. The cofactor is Co(2+). Requires thiamine diphosphate as cofactor.

It carries out the reaction D-sedoheptulose 7-phosphate + D-glyceraldehyde 3-phosphate = aldehydo-D-ribose 5-phosphate + D-xylulose 5-phosphate. Its pathway is carbohydrate biosynthesis; Calvin cycle. In terms of biological role, catalyzes the transfer of a two-carbon ketol group from a ketose donor to an aldose acceptor, via a covalent intermediate with the cofactor thiamine pyrophosphate. In Sinorhizobium medicae (strain WSM419) (Ensifer medicae), this protein is Transketolase (cbbT).